The sequence spans 291 residues: Urease accessory protein UreD (291 aa).

Belongs to the UreD family. UreD, UreF and UreG form a complex that acts as a GTP-hydrolysis-dependent molecular chaperone, activating the urease apoprotein by helping to assemble the nickel containing metallocenter of UreC. The UreE protein probably delivers the nickel.

The protein localises to the cytoplasm. In terms of biological role, required for maturation of urease via the functional incorporation of the urease nickel metallocenter. The polypeptide is Urease accessory protein UreD (Polynucleobacter asymbioticus (strain DSM 18221 / CIP 109841 / QLW-P1DMWA-1) (Polynucleobacter necessarius subsp. asymbioticus)).